A 119-amino-acid chain; its full sequence is Urotensin-2B (119 aa).

Residues 1 to 28 (MNKILSSTVCFGLLTLLSVLSFLQSVHG) form the signal peptide. The propeptide occupies 29–109 (RPYLTQGNEI…VDGLFSSHPS (81 aa)). A disulfide bond links cysteine 113 and cysteine 118.

Belongs to the urotensin-2 family.

The protein localises to the secreted. Its function is as follows. Potent vasoconstrictor. The sequence is that of Urotensin-2B (UTS2B) from Homo sapiens (Human).